A 423-amino-acid chain; its full sequence is Proline racemase A (423 aa).

Positions 1-31 (MRKSVCPKQKFFFSAFPFFFFFCVFPLISRT) are cleaved as a signal peptide. Cys-160 (proton acceptor) is an active-site residue. 161–162 (GH) provides a ligand contact to substrate. N-linked (GlcNAc...) asparagine glycosylation is found at Asn-213, Asn-266, and Asn-282. A substrate-binding site is contributed by Asp-326. Cys-330 serves as the catalytic Proton donor. Substrate is bound at residue 331–332 (GT).

The protein belongs to the proline racemase family. Homodimer.

Its subcellular location is the secreted. It localises to the membrane. The protein resides in the cytoplasm. It carries out the reaction L-proline = D-proline. With respect to regulation, inhibited by maleic acid, iodoacetamide, iodoacetate and, most particularly, pyrrole-2-carboxylic acid. Catalyzes the interconversion of L- and D-proline. Secreted isoform 1 contributes to parasite immune evasion by acting as a B-cell mitogen. Probably involved in parasite differentiation and infectivity. In Trypanosoma cruzi (strain CL Brener), this protein is Proline racemase A (PA45-A).